We begin with the raw amino-acid sequence, 324 residues long: Phospho-N-acetylmuramoyl-pentapeptide-transferase (324 aa).

10 consecutive transmembrane segments (helical) span residues 5–25 (GLLV…PLFI), 52–72 (PTMG…IMAI), 77–97 (LGAE…IGFL), 122–142 (VIAI…YIMI), 149–169 (FELG…GSNA), 176–196 (LDGL…IIAV), 201–221 (FGVA…LVFN), 227–247 (VFMG…VAIL), 253–273 (LLVI…IQVI), and 302–322 (VVVT…YIGV).

The protein belongs to the glycosyltransferase 4 family. MraY subfamily. The cofactor is Mg(2+).

Its subcellular location is the cell membrane. It catalyses the reaction UDP-N-acetyl-alpha-D-muramoyl-L-alanyl-gamma-D-glutamyl-meso-2,6-diaminopimeloyl-D-alanyl-D-alanine + di-trans,octa-cis-undecaprenyl phosphate = di-trans,octa-cis-undecaprenyl diphospho-N-acetyl-alpha-D-muramoyl-L-alanyl-D-glutamyl-meso-2,6-diaminopimeloyl-D-alanyl-D-alanine + UMP. Its pathway is cell wall biogenesis; peptidoglycan biosynthesis. Functionally, catalyzes the initial step of the lipid cycle reactions in the biosynthesis of the cell wall peptidoglycan: transfers peptidoglycan precursor phospho-MurNAc-pentapeptide from UDP-MurNAc-pentapeptide onto the lipid carrier undecaprenyl phosphate, yielding undecaprenyl-pyrophosphoryl-MurNAc-pentapeptide, known as lipid I. The protein is Phospho-N-acetylmuramoyl-pentapeptide-transferase of Bacillus mycoides (strain KBAB4) (Bacillus weihenstephanensis).